We begin with the raw amino-acid sequence, 541 residues long: Long-chain-fatty-acid--CoA ligase (541 aa).

Position 184 (Thr184) interacts with Mg(2+). 2 residues coordinate ATP: Val231 and Trp234. The tetradecanoyl-AMP site is built by Gly302, Gln322, Gly323, and Thr327. 2 residues coordinate ATP: Gly323 and Thr327. Position 328 (Glu328) interacts with Mg(2+). Asp418, Lys435, Lys439, and Trp444 together coordinate ATP. Tetradecanoyl-AMP contacts are provided by Asp418, Lys435, and Lys439.

It belongs to the ATP-dependent AMP-binding enzyme family. Forms a domain swapped homodimer. Requires Mg(2+) as cofactor.

The catalysed reaction is a long-chain fatty acid + ATP + CoA = a long-chain fatty acyl-CoA + AMP + diphosphate. The enzyme catalyses tetradecanoate + ATP + CoA = tetradecanoyl-CoA + AMP + diphosphate. It catalyses the reaction hexadecanoate + ATP + CoA = hexadecanoyl-CoA + AMP + diphosphate. The protein operates within lipid metabolism; fatty acid metabolism. Functionally, catalyzes the esterification of a number of long chain fatty acids with CoA, resulting in the formation of long-chain fatty acyl-CoA. Myristate (C14) is the most efficiently processed fatty acid, followed by palmitate (C16). Also catalyzes the esterification of stearate (C18) and laurate (C12), but at lower efficiency. Does not catalyze the esterification of the unsaturated fatty acids mysteroleic and palmitoleic acids in vitro. The sequence is that of Long-chain-fatty-acid--CoA ligase from Thermus thermophilus (strain ATCC 27634 / DSM 579 / HB8).